The primary structure comprises 230 residues: Oxaloacetate tautomerase FAHD1, mitochondrial (230 aa).

The transit peptide at 1–26 directs the protein to the mitochondrion; the sequence is MAAAAAAAAQRLLAASTKIIGVGRNY. Residues E73, E75, and D104 each contribute to the Mg(2+) site.

The protein belongs to the FAH family. Mg(2+) is required as a cofactor. The cofactor is Mn(2+).

It is found in the mitochondrion. It carries out the reaction oxaloacetate = enol-oxaloacetate. Its function is as follows. Tautomerase that converts enol-oxaloacetate, a strong inhibitor of succinate dehydrogenase, to the physiological keto form of oxaloacetate. This chain is Oxaloacetate tautomerase FAHD1, mitochondrial, found in Oryza sativa subsp. japonica (Rice).